We begin with the raw amino-acid sequence, 413 residues long: MKIYLVGGAVRDALLGLPVKDKDWVVVGATPQEMLDAGYQQVGRDFPVFLHPQTHEEYALARTERKSGSGYTGFTCYAAPDVTLEADLQRRDLTINALARDDDGQIIDPYHGRRDLEARLLRHVSPAFGEDPLRVLRVARFAARYAHLSFRIADETLSLMRDMTAAGELEHLTPERVWKETENALTTRNPQVYFQVLRDCGALRVLFPEIDALFGVPAPAKWHPEIDTGVHTLMTLSMAAMLSPQLDVRFATLCHDLGKGLTPKNLWPRHHGHGPAGVKLVEQLCQRLRVPNDLRDLAKLVAEYHDLIHTFPILQPKTIVKLFDAIDAWRKPQRVEQIALTSEADVRGRTGFEASDYPQGRWLREAWQVAQAVSTKEVVEAGFKGIEIREELTKRRIAAVANWKEKRCPNPAS.

2 residues coordinate ATP: Gly-8 and Arg-11. Residues Gly-8 and Arg-11 each contribute to the CTP site. 2 residues coordinate Mg(2+): Asp-21 and Asp-23. Arg-91, Arg-137, and Arg-140 together coordinate ATP. CTP is bound by residues Arg-91, Arg-137, and Arg-140. Residues 228–329 enclose the HD domain; it reads TGVHTLMTLS…VKLFDAIDAW (102 aa).

The protein belongs to the tRNA nucleotidyltransferase/poly(A) polymerase family. Bacterial CCA-adding enzyme type 1 subfamily. In terms of assembly, monomer. Can also form homodimers and oligomers. It depends on Mg(2+) as a cofactor. Ni(2+) serves as cofactor.

It catalyses the reaction a tRNA precursor + 2 CTP + ATP = a tRNA with a 3' CCA end + 3 diphosphate. The enzyme catalyses a tRNA with a 3' CCA end + 2 CTP + ATP = a tRNA with a 3' CCACCA end + 3 diphosphate. Its function is as follows. Catalyzes the addition and repair of the essential 3'-terminal CCA sequence in tRNAs without using a nucleic acid template. Adds these three nucleotides in the order of C, C, and A to the tRNA nucleotide-73, using CTP and ATP as substrates and producing inorganic pyrophosphate. tRNA 3'-terminal CCA addition is required both for tRNA processing and repair. Also involved in tRNA surveillance by mediating tandem CCA addition to generate a CCACCA at the 3' terminus of unstable tRNAs. While stable tRNAs receive only 3'-terminal CCA, unstable tRNAs are marked with CCACCA and rapidly degraded. The protein is Multifunctional CCA protein of Salmonella schwarzengrund (strain CVM19633).